Consider the following 122-residue polypeptide: MGYRKLGRTSDQRKAMLRDLATSLIVNERIETTEARAKELRGVVDSLITLGKKGDLASRRQAAKVVRDVEILNEDDTTQTALQKLFGEIAPRYTDRQGGYTRVLKAGPRRGDGAESAIIELV.

The protein belongs to the bacterial ribosomal protein bL17 family. Part of the 50S ribosomal subunit. Contacts protein L32.

This Staphylococcus carnosus (strain TM300) protein is Large ribosomal subunit protein bL17.